Here is a 75-residue protein sequence, read N- to C-terminus: UPF0291 protein lmo1304 (75 aa).

The disordered stretch occupies residues 56 to 75 (DPNGKDVTPHKVKQLRKNKY). Residues 65–75 (HKVKQLRKNKY) show a composition bias toward basic residues.

The protein belongs to the UPF0291 family.

The protein resides in the cytoplasm. The sequence is that of UPF0291 protein lmo1304 from Listeria monocytogenes serovar 1/2a (strain ATCC BAA-679 / EGD-e).